A 91-amino-acid chain; its full sequence is Putative protein p22 (91 aa).

The protein is Putative protein p22 (22) of Escherichia coli (Bacteriophage APSE-1).